The primary structure comprises 56 residues: Potassium channel toxin alpha-KTx 9.2 (56 aa).

The signal sequence occupies residues 1–28; that stretch reads MSRLFTLVLIVLAMNVMMAIISDPVVEA. Intrachain disulfides connect Cys31–Cys47, Cys34–Cys52, and Cys38–Cys54.

In terms of tissue distribution, expressed by the venom gland.

It is found in the secreted. Functionally, blocks small conductance calcium-activated potassium channels (KCNN, SK). Low toxicity by intracerebroventricular injection into mice. This chain is Potassium channel toxin alpha-KTx 9.2, found in Olivierus martensii (Manchurian scorpion).